A 912-amino-acid polypeptide reads, in one-letter code: Protein translocase subunit SecA (912 aa).

ATP is bound by residues Gln-87, 105–109 (GEGKT), and Asp-508. The tract at residues 864 to 912 (AEEEVEQMQGGNAPVPVSQVTRDEPKVGRNDPCPCGSGKKYKHCHGQLS) is disordered. Zn(2+)-binding residues include Cys-896, Cys-898, Cys-907, and His-908. A compositionally biased stretch (basic residues) spans 902-912 (KKYKHCHGQLS).

It belongs to the SecA family. As to quaternary structure, monomer and homodimer. Part of the essential Sec protein translocation apparatus which comprises SecA, SecYEG and auxiliary proteins SecDF-YajC and YidC. The cofactor is Zn(2+).

It localises to the cell inner membrane. It is found in the cytoplasm. It catalyses the reaction ATP + H2O + cellular proteinSide 1 = ADP + phosphate + cellular proteinSide 2.. Part of the Sec protein translocase complex. Interacts with the SecYEG preprotein conducting channel. Has a central role in coupling the hydrolysis of ATP to the transfer of proteins into and across the cell membrane, serving both as a receptor for the preprotein-SecB complex and as an ATP-driven molecular motor driving the stepwise translocation of polypeptide chains across the membrane. The sequence is that of Protein translocase subunit SecA from Xanthomonas euvesicatoria pv. vesicatoria (strain 85-10) (Xanthomonas campestris pv. vesicatoria).